A 666-amino-acid chain; its full sequence is MGTFKINSAFKPTGDQPQAIASIVNGIKNNNKWQTLLGVTGSGKTFTMANIIEKVQKPTLVIAHNKTLAAQLCSEFRDFFPDSSVEYFVSYYDYYQPEAYVAQTDTYIEKDASINDEIDKLRHSATSALFERRDVIVVASVSCIYGLGNPEEYKKLSISLRTGMNKDRDEILEKLVEMQYERNEINFVRGTFKVKGDTIDIFPAGSTSSAIRVELFGDEIDKIKEFDVLTGNTIKTLKHTVIFPASHFATSSDKIEEAIKQIEIELEERLRELNSEDKLLEAQRLKQRTNFDIEMMREVGYCTGIENYSRIMDGRQKGEPPKTLIDYFPDDFLMFIDESHVTLPQVKAMYGGDRSRKNSLVDYGFRLPSAYDNRPLKFDEFEEKINQIVFVSATPSNYELDHSENIAEQVIRPTGLLDPEIEVRPTKGQIDDLYSEIKNTIQNGFRILVTTLTKKMAEDLTDYLKDLGIKTTYMHSDIDTLERMKIIKDVRTGEFDVLVGINLLREGLDIPEVALVAILDADKEGFLRSERSLIQTIGRAARNSESRVIMYGDKITDAMGKAISETKRRRKIQIEYNEKNGIKPTTIKKAVRDVIGISEVAEGKTEYKSMDEAVKADNKNIDKLIKEFEKEMKEAAKELQFEKAAYFRDKVNELKKKLNENEEVIK.

The Helicase ATP-binding domain occupies 25–412; that stretch reads NGIKNNNKWQ…SENIAEQVIR (388 aa). 38–45 is a binding site for ATP; the sequence is GVTGSGKT. Positions 91-114 match the Beta-hairpin motif; sequence YYDYYQPEAYVAQTDTYIEKDASI. A Helicase C-terminal domain is found at 429-595; it reads QIDDLYSEIK…TIKKAVRDVI (167 aa). One can recognise a UVR domain in the interval 622 to 657; sequence DKLIKEFEKEMKEAAKELQFEKAAYFRDKVNELKKK.

It belongs to the UvrB family. Forms a heterotetramer with UvrA during the search for lesions. Interacts with UvrC in an incision complex.

It is found in the cytoplasm. The UvrABC repair system catalyzes the recognition and processing of DNA lesions. A damage recognition complex composed of 2 UvrA and 2 UvrB subunits scans DNA for abnormalities. Upon binding of the UvrA(2)B(2) complex to a putative damaged site, the DNA wraps around one UvrB monomer. DNA wrap is dependent on ATP binding by UvrB and probably causes local melting of the DNA helix, facilitating insertion of UvrB beta-hairpin between the DNA strands. Then UvrB probes one DNA strand for the presence of a lesion. If a lesion is found the UvrA subunits dissociate and the UvrB-DNA preincision complex is formed. This complex is subsequently bound by UvrC and the second UvrB is released. If no lesion is found, the DNA wraps around the other UvrB subunit that will check the other stand for damage. In Clostridium acetobutylicum (strain ATCC 824 / DSM 792 / JCM 1419 / IAM 19013 / LMG 5710 / NBRC 13948 / NRRL B-527 / VKM B-1787 / 2291 / W), this protein is UvrABC system protein B.